A 474-amino-acid chain; its full sequence is Putative response regulator NtrX-like (474 aa).

The Response regulatory domain maps to 5-121 (DVLIVDDEES…KLVILLTRAC (117 aa)). Residue D54 is modified to 4-aspartylphosphate. Residues 143–368 (LVGECSVTLK…LRNVVEWTLI (226 aa)) form the Sigma-54 factor interaction domain. Residues 171–178 (GKVGSGKE) and 231–240 (ANNGTLYIDE) each bind ATP.

In terms of biological role, member of the two-component regulatory system RC0849/RC0948. This is Putative response regulator NtrX-like from Rickettsia conorii (strain ATCC VR-613 / Malish 7).